Reading from the N-terminus, the 239-residue chain is Leucine rich adaptor protein 1 (239 aa).

2 LRR repeats span residues 55-83 and 93-114; these read LGDK…LVTL and LLEE…QYSL. The segment covering 107-118 has biased composition (low complexity); that stretch reads LTSSQYSLTGGS. The segment at 107–140 is disordered; it reads LTSSQYSLTGGSPERSRRGSWDSLPDTSSTDRLD. 3 positions are modified to phosphoserine: S118, S126, and S129.

Forms a tripartite complex with CDC42BPA/CDC42BPB and MYO18A acting as an adapter connecting both. Its binding to CDC42BPA/CDC42BPB results in their activation by abolition of their negative autoregulation. Interacts with CDC42BPA and CDC42BPB. In terms of processing, phosphorylated.

The protein localises to the cytoplasm. In terms of biological role, acts as an activator of the canonical NF-kappa-B pathway and drive the production of pro-inflammatory cytokines. Promotes the antigen (Ag)-presenting and priming function of dendritic cells via the canonical NF-kappa-B pathway. In concert with MYO18A and CDC42BPA/CDC42BPB, is involved in modulating lamellar actomyosin retrograde flow that is crucial to cell protrusion and migration. Activates CDC42BPA/CDC42BPB and targets it to actomyosin through its interaction with MYO18A, leading to MYL9/MLC2 phosphorylation and MYH9/MYH10-dependent actomyosin assembly in the lamella. The polypeptide is Leucine rich adaptor protein 1 (Lurap1) (Rattus norvegicus (Rat)).